Consider the following 377-residue polypeptide: MEDDGYNYYGADNQSECDYADWKPSGALIPAIYMLVFLLGTTGNGLVLWTVFRTSREKRRSADIFIASLAVADLTFVVTLPLWATYTYREFDWPFGTFSCKLSSYLIFVNMYASVFCLTGLSFDRYLAIVRPVANARLRLRVSGAVATAVLWVLAALLAVPVMVFRSTDASENGTKIQCYMDYSMVATSNSEWAWEVGLGVSSTAVGFVVPFTIMLTCYFFIAQTIAGHFRKERIEGLRKRRRLLSIIVVLVVTFALCWMPYHLVKTLYMLGSLLHWPCDFDIFLMNVFPYCTCISYVNSCLNPFLYAFFDPRFRQACTSMLCCDQSGCKGTPHSSSAEKSASYSSGHSQGPGPNMGKGGEQMHEKSIPYSQETLVD.

The Extracellular portion of the chain corresponds to 1 to 28 (MEDDGYNYYGADNQSECDYADWKPSGAL). A glycan (N-linked (GlcNAc...) asparagine) is linked at Asn-13. 2 cysteine pairs are disulfide-bonded: Cys-17-Cys-279 and Cys-100-Cys-179. Residues 29-52 (IPAIYMLVFLLGTTGNGLVLWTVF) form a helical membrane-spanning segment. Over 53 to 62 (RTSREKRRSA) the chain is Cytoplasmic. A helical transmembrane segment spans residues 63 to 84 (DIFIASLAVADLTFVVTLPLWA). Over 85-97 (TYTYREFDWPFGT) the chain is Extracellular. Residues 98–123 (FSCKLSSYLIFVNMYASVFCLTGLSF) form a helical membrane-spanning segment. The Cytoplasmic segment spans residues 124–144 (DRYLAIVRPVANARLRLRVSG). The helical transmembrane segment at 145–162 (AVATAVLWVLAALLAVPV) threads the bilayer. The Extracellular segment spans residues 163 to 196 (MVFRSTDASENGTKIQCYMDYSMVATSNSEWAWE). N-linked (GlcNAc...) asparagine glycosylation occurs at Asn-173. A helical transmembrane segment spans residues 197–221 (VGLGVSSTAVGFVVPFTIMLTCYFF). At 222–244 (IAQTIAGHFRKERIEGLRKRRRL) the chain is on the cytoplasmic side. The chain crosses the membrane as a helical span at residues 245–268 (LSIIVVLVVTFALCWMPYHLVKTL). The Extracellular segment spans residues 269-287 (YMLGSLLHWPCDFDIFLMN). A helical transmembrane segment spans residues 288–310 (VFPYCTCISYVNSCLNPFLYAFF). Topologically, residues 311-377 (DPRFRQACTS…IPYSQETLVD (67 aa)) are cytoplasmic. A disordered region spans residues 334–377 (HSSSAEKSASYSSGHSQGPGPNMGKGGEQMHEKSIPYSQETLVD). Residues 335–349 (SSSAEKSASYSSGHS) show a composition bias toward low complexity.

The protein belongs to the G-protein coupled receptor 1 family. As to quaternary structure, homodimer; dimerization inhibits APLNR-mediated G protein and beta-arrestin signaling pathways compared to monomeric APLNR. As to expression, expressed in coronary endothelial cells (at protein level). Expressed in the embryo, allantoic and endothelial precursor cells of the yolk sac at 8 days post-coitum (dpc). Expressed in the secondary heart field and somite at 8.25 dpc. Expressed in fetal allantoic endothelial cells at 9 dpc. Expressed in the allantoid and the invading fetal vasculature of the placenta at 9.5 dpc. Expressed in endothelial cells adjacent to syncytiotrophoblast cells at 10.5 dpc. Expressed weakly in the embryonic heart at 11.5 dpc. Expressed in the adult heart. Expressed in endothelial cells and cardiomyocytes and weakly expressed in fibroblasts.

The protein resides in the cell membrane. Its function is as follows. G protein-coupled receptor for peptide hormones apelin (APLN) and apelin receptor early endogenous ligand (APELA), that plays a role in the regulation of normal cardiovascular function and fluid homeostasis. When acting as apelin receptor, activates both G(i) protein pathway that inhibits adenylate cyclase activity, and the beta-arrestin pathway leading to internalization of the receptor. APLNR/APJ receptor is also activated by mechanical strech in a G-protein-independent fashion to induce beta-arrestin signaling leading to cardiac hypertrophy. However, the presence of apelin ligand blunts cardiac hypertrophic induction from APLNR/APJ on response to pathological stimuli. Plays a key role in early development such as gastrulation, blood vessels formation and heart morphogenesis by acting as a receptor for APELA hormone. May promote angioblast migration toward the embryonic midline, i.e. the position of the future vessel formation, during vasculogenesis. Promotes sinus venosus (SV)-derived endothelial cells migration into the developing heart to promote coronary blood vessel development. Also plays a role in various processes in adults such as regulation of blood vessel formation, blood pressure and heart contractility and protection from cardiac hypertrophy and heart failure. This is Apelin receptor from Mus musculus (Mouse).